The sequence spans 550 residues: Pectinesterase 2.2 (550 aa).

N179 carries N-linked (GlcNAc...) asparagine glycosylation. Substrate contacts are provided by T312 and Q342. Cysteines 331 and 358 form a disulfide. D365 acts as the Proton donor in catalysis. The active-site Nucleophile is D386. An intrachain disulfide couples C399 to C433. The substrate site is built by R454 and W456.

This sequence in the N-terminal section; belongs to the PMEI family. The protein in the C-terminal section; belongs to the pectinesterase family.

The protein resides in the secreted. It is found in the cell wall. The catalysed reaction is [(1-&gt;4)-alpha-D-galacturonosyl methyl ester](n) + n H2O = [(1-&gt;4)-alpha-D-galacturonosyl](n) + n methanol + n H(+). The protein operates within glycan metabolism; pectin degradation; 2-dehydro-3-deoxy-D-gluconate from pectin: step 1/5. Pectinesterase may play a role in cell wall metabolism during fruit growth and development prior to ripening and may be required for preparing cell walls for softening by polygalacturonase during fruit ripening. This is Pectinesterase 2.2 (PME2.2) from Solanum lycopersicum (Tomato).